Consider the following 175-residue polypeptide: Small ribosomal subunit protein uS9 (175 aa).

The protein belongs to the universal ribosomal protein uS9 family.

This is Small ribosomal subunit protein uS9 from Streptomyces griseus subsp. griseus (strain JCM 4626 / CBS 651.72 / NBRC 13350 / KCC S-0626 / ISP 5235).